A 353-amino-acid chain; its full sequence is Guanine nucleotide-binding protein alpha-1 subunit (353 aa).

Gly-2 carries N-myristoyl glycine lipidation. The S-palmitoyl cysteine moiety is linked to residue Cys-3. In terms of domain architecture, G-alpha spans 32-353 (NEIKMLLLGA…QVNLRDCGLL (322 aa)). Residues 35–48 (KMLLLGAGESGKST) are G1 motif. Glu-43, Ser-44, Gly-45, Lys-46, Ser-47, Thr-48, Asp-150, Leu-175, Thr-181, Gly-203, Asn-269, Lys-270, Asp-272, and Ala-325 together coordinate GTP. Ser-47 is a binding site for Mg(2+). The segment at 173–181 (DVLRSRVKT) is G2 motif. A Mg(2+)-binding site is contributed by Thr-181. The G3 motif stretch occupies residues 196 to 205 (YKLFDVGGQR). Residues 265–272 (ILFLNKID) are G4 motif. Residues 323–328 (TCATDT) are G5 motif.

It belongs to the G-alpha family. As to quaternary structure, g proteins are composed of 3 units; alpha, beta and gamma. The alpha chain contains the guanine nucleotide binding site. It depends on Mg(2+) as a cofactor.

Guanine nucleotide-binding proteins (G proteins) are involved as modulators or transducers in various transmembrane signaling systems. This is Guanine nucleotide-binding protein alpha-1 subunit (GPA1) from Mycosarcoma maydis (Corn smut fungus).